Reading from the N-terminus, the 218-residue chain is Small ribosomal subunit protein uS3 (218 aa).

The region spanning 38–106 is the KH type-2 domain; that stretch reads IREFINQRLS…RVHINILEIK (69 aa).

The protein belongs to the universal ribosomal protein uS3 family. In terms of assembly, part of the 30S ribosomal subunit. Forms a tight complex with proteins S10 and S14.

In terms of biological role, binds the lower part of the 30S subunit head. Binds mRNA in the 70S ribosome, positioning it for translation. The polypeptide is Small ribosomal subunit protein uS3 (Bacillus licheniformis (strain ATCC 14580 / DSM 13 / JCM 2505 / CCUG 7422 / NBRC 12200 / NCIMB 9375 / NCTC 10341 / NRRL NRS-1264 / Gibson 46)).